We begin with the raw amino-acid sequence, 196 residues long: METIALGVEPRVIRKKEAAKLRKNGIVPAVIYHKGEETVAVSVNEIALNKLVHSAESHIIDLQFPDGKTLRSFIKDVQFDPVSDRIIHTDFQLFAADEVVEMEVPVAISGDSIGVEKGGKILILRHALTIQGLPANMPDHVTIDVTNLDMGHIIHVREIPMDAYTGLSIMDEPETPVISIAPPKKDAEAETESAAG.

A disordered region spans residues 177–196 (VISIAPPKKDAEAETESAAG).

It belongs to the bacterial ribosomal protein bL25 family. CTC subfamily. Part of the 50S ribosomal subunit; part of the 5S rRNA/L5/L18/L25 subcomplex. Contacts the 5S rRNA. Binds to the 5S rRNA independently of L5 and L18.

Its function is as follows. This is one of the proteins that binds to the 5S RNA in the ribosome where it forms part of the central protuberance. The polypeptide is Large ribosomal subunit protein bL25 (Chlorobium limicola (strain DSM 245 / NBRC 103803 / 6330)).